A 507-amino-acid polypeptide reads, in one-letter code: RNA-binding protein Nova-1 (507 aa).

A disordered region spans residues 1 to 44 (MMAAAPIQQNGTHTGVPIDLDPPDSRKRPLEAPPEAGSTKRTNT). A Bipartite nuclear localization signal motif is present at residues 27 to 43 (KRPLEAPPEAGSTKRTN). Positions 49–116 (QYFLKVLIPS…EALNAVHGFI (68 aa)) constitute a KH 1 domain. The tract at residues 139–171 (QTTVNPDRIKQTLPSSPTTTKSSPSDPMTTSRA) is disordered. Residues 150-169 (TLPSSPTTTKSSPSDPMTTS) are compositionally biased toward low complexity. Position 154 is a phosphoserine (Ser-154). KH domains follow at residues 171–237 (ANQV…VELI) and 421–488 (KDVV…QYLI). The segment at 419–503 (GSKDVVEIAV…YEQGVRAANP (85 aa)) is required for RNA binding.

As to quaternary structure, interacts with PTBP2; the interaction is direct. As to expression, expressed in neurons of the cortex, sub-cortex, cerebellum and brainstem (at protein level). Expressed in motor neurons, but not in glia.

It localises to the nucleus. Its function is as follows. Functions to regulate alternative splicing in neurons by binding pre-mRNA in a sequence-specific manner to activate exon inclusion or exclusion. It binds specifically to the sequences 5'-YCAY-3' and regulates splicing in only a subset of regulated exons. Binding to an exonic 5'-YCAY-3' cluster changes the protein complexes assembled on pre-mRNA, blocking U1 snRNP binding and exon inclusion, whereas binding to an intronic 5'-YCAY-3' cluster enhances spliceosome assembly and exon inclusion. Binding to 5'-YCAY-3' clusters results in a local and asymmetric action to regulate spliceosome assembly and alternative splicing in neurons. Binding to an exonic 5'-YCAY-3' cluster changed the protein complexes assembled on pre-mRNA, blocking U1 snRNP (small nuclear ribonucleoprotein) binding and exon inclusion, whereas binding to an intronic 5'-YCAY-3' cluster enhanced spliceosome assembly and exon inclusion. With NOVA1, they perform unique biological functions in different brain areas and cell types. Autoregulates its own expression by acting as a splicing repressor. Acts to activate the inclusion of exon E3A in the glycine receptor alpha-2 chain and of exon E9 in gamma-aminobutyric-acid receptor gamma-2 subunit via a distal downstream UCAU-rich intronic splicing enhancer. Acts to regulate a novel glycine receptor alpha-2 chain splice variant (alpha-2N) in developing spinal cord. This is RNA-binding protein Nova-1 from Mus musculus (Mouse).